The primary structure comprises 324 residues: Elongation factor P--(R)-beta-lysine ligase (324 aa).

Residue 75 to 77 (SPE) participates in substrate binding. Residues 99 to 101 (RNQ) and Asn-108 each bind ATP. Tyr-117 provides a ligand contact to substrate. ATP is bound at residue 243–244 (EL). Residue Glu-250 participates in substrate binding. Residue Gly-299 coordinates ATP.

Belongs to the class-II aminoacyl-tRNA synthetase family. EpmA subfamily. As to quaternary structure, homodimer.

It catalyses the reaction D-beta-lysine + L-lysyl-[protein] + ATP = N(6)-((3R)-3,6-diaminohexanoyl)-L-lysyl-[protein] + AMP + diphosphate + H(+). Its function is as follows. With EpmB is involved in the beta-lysylation step of the post-translational modification of translation elongation factor P (EF-P). Catalyzes the ATP-dependent activation of (R)-beta-lysine produced by EpmB, forming a lysyl-adenylate, from which the beta-lysyl moiety is then transferred to the epsilon-amino group of a conserved specific lysine residue in EF-P. The protein is Elongation factor P--(R)-beta-lysine ligase of Buchnera aphidicola subsp. Schizaphis graminum (strain Sg).